Reading from the N-terminus, the 481-residue chain is Cobyric acid synthase (481 aa).

The GATase cobBQ-type domain maps to 244–431 (VLRVVIPVLP…LHGLFDAPEA (188 aa)). Cysteine 325 functions as the Nucleophile in the catalytic mechanism. Histidine 423 is an active-site residue.

The protein belongs to the CobB/CobQ family. CobQ subfamily.

It functions in the pathway cofactor biosynthesis; adenosylcobalamin biosynthesis. In terms of biological role, catalyzes amidations at positions B, D, E, and G on adenosylcobyrinic A,C-diamide. NH(2) groups are provided by glutamine, and one molecule of ATP is hydrogenolyzed for each amidation. This chain is Cobyric acid synthase, found in Ralstonia nicotianae (strain ATCC BAA-1114 / GMI1000) (Ralstonia solanacearum).